Reading from the N-terminus, the 461-residue chain is MTKNFRFEKDSMGQIKVPSEALWGAQTQRSIINFSIGEELIPIELIYSLTVIKRAAAISNFKLGLINNVKKDLIIEACTEILDGKHDSQFPLKIWQTGSGTQTNMNINEVISNIAALKTNSGLGSHHPIHPNDDVNKSQSTNDTFPAAIQISVVTQIIKKLVPSIKELTKVLDSKSNKWKDLIKIGRTHFQDAVPISLGQEVSAWSKQLKDAEDALIISLNELCFLPLGGTAVGTGINCPKDFSKESIKSISEYTGLFFYKSKNHFSLMASHDRLAQVMGQIKILASALFKISNDIKILSSGPRSGIYELIIPKNEPGSSIMPGKVNPTQCEALSMVCTQVMGFEYAVSIANASGTLQMNEYKPLIGFNILTSIKLLNHAISNFRLKLVEGIQPNPKTIKANLENSLMLVTALVPKIGYEKAAEIANLAFNESINLKEATIKLGYLTANEFEDAINTNKMI.

Residues 99-101 (SGT), 130-133 (HPND), 140-142 (STN), and Thr-188 contribute to the substrate site. His-189 functions as the Proton donor/acceptor in the catalytic mechanism. The active site involves Ser-319. Residues Ser-320 and 325–327 (KVN) each bind substrate.

It belongs to the class-II fumarase/aspartase family. Fumarase subfamily. In terms of assembly, homotetramer.

It is found in the cytoplasm. The enzyme catalyses (S)-malate = fumarate + H2O. The protein operates within carbohydrate metabolism; tricarboxylic acid cycle; (S)-malate from fumarate: step 1/1. In terms of biological role, involved in the TCA cycle. Catalyzes the stereospecific interconversion of fumarate to L-malate. The sequence is that of Fumarate hydratase class II from Prochlorococcus marinus subsp. pastoris (strain CCMP1986 / NIES-2087 / MED4).